Reading from the N-terminus, the 211-residue chain is Cytochrome c biogenesis ATP-binding export protein CcmA 2 (211 aa).

Residues 6 to 208 (LEARELGVRR…GAVLDLATDA (203 aa)) enclose the ABC transporter domain. Residue 38–45 (GPNGAGKT) coordinates ATP.

It belongs to the ABC transporter superfamily. CcmA exporter (TC 3.A.1.107) family. The complex is composed of two ATP-binding proteins (CcmA) and two transmembrane proteins (CcmB).

The protein localises to the cell inner membrane. The enzyme catalyses heme b(in) + ATP + H2O = heme b(out) + ADP + phosphate + H(+). In terms of biological role, part of the ABC transporter complex CcmAB involved in the biogenesis of c-type cytochromes; once thought to export heme, this seems not to be the case, but its exact role is uncertain. Responsible for energy coupling to the transport system. This Cupriavidus metallidurans (strain ATCC 43123 / DSM 2839 / NBRC 102507 / CH34) (Ralstonia metallidurans) protein is Cytochrome c biogenesis ATP-binding export protein CcmA 2.